The following is a 258-amino-acid chain: Myogenic factor 5 (258 aa).

The tract at residues 21–50 (LSSPEGEFPEDFEPRELPPFGAPAPTEPAC) is disordered. The bHLH domain occupies 85–136 (DRRKAATMRERRRLKKVNQAFETLKRCTTANPNQRLPKVEILRNAIRYIESL). Residues 220–258 (AEEPGLPLRHAGSLSPGASIDSGPGTPGSPPPRRTYQAL) are disordered.

Efficient DNA binding requires dimerization with another bHLH protein.

Its subcellular location is the nucleus. Acts as a transcriptional activator that promotes transcription of muscle-specific target genes and plays a role in muscle differentiation. Induces fibroblasts to differentiate into myoblasts. Probable sequence specific DNA-binding protein. This Gallus gallus (Chicken) protein is Myogenic factor 5 (MYF5).